Here is an 80-residue protein sequence, read N- to C-terminus: Large ribosomal subunit protein bL31B (80 aa).

It belongs to the bacterial ribosomal protein bL31 family. Type B subfamily. Part of the 50S ribosomal subunit.

The protein is Large ribosomal subunit protein bL31B of Methylobacillus flagellatus (strain ATCC 51484 / DSM 6875 / VKM B-1610 / KT).